A 158-amino-acid polypeptide reads, in one-letter code: NADPH-dependent 7-cyano-7-deazaguanine reductase (158 aa).

The tract at residues 1-37 (MAKRSIKSETSPELQLGRPVTAPDSPETARLDRVPNP) is disordered. A compositionally biased stretch (basic and acidic residues) spans 27–37 (ETARLDRVPNP). The active-site Thioimide intermediate is cysteine 56. Aspartate 63 (proton donor) is an active-site residue. Residues 78-80 (VES) and 97-98 (HE) each bind substrate.

This sequence belongs to the GTP cyclohydrolase I family. QueF type 1 subfamily.

It localises to the cytoplasm. It catalyses the reaction 7-aminomethyl-7-carbaguanine + 2 NADP(+) = 7-cyano-7-deazaguanine + 2 NADPH + 3 H(+). It functions in the pathway tRNA modification; tRNA-queuosine biosynthesis. Its function is as follows. Catalyzes the NADPH-dependent reduction of 7-cyano-7-deazaguanine (preQ0) to 7-aminomethyl-7-deazaguanine (preQ1). The protein is NADPH-dependent 7-cyano-7-deazaguanine reductase of Bradyrhizobium sp. (strain BTAi1 / ATCC BAA-1182).